The chain runs to 205 residues: Latherin (205 aa).

A disulfide bond links cysteine 133 and cysteine 176.

Belongs to the BPI/LBP/Plunc superfamily. Plunc family. As to quaternary structure, monomer.

The protein localises to the secreted. Its function is as follows. Major protein in sweat, has surfactant properties. In Equus quagga burchellii (Burchell's zebra), this protein is Latherin (LATH).